The chain runs to 368 residues: Putative zinc metalloprotease Cj1068 (368 aa).

Zn(2+) is bound at residue His36. The active site involves Glu37. Residue His40 coordinates Zn(2+). The next 3 helical transmembrane spans lie at 112–134 (IYIL…IIIG), 291–313 (FTLL…LLPI), and 338–360 (TFEY…ATYN). In terms of domain architecture, PDZ spans 126 to 197 (AFFLYIIIGN…LKILINREGK (72 aa)).

Belongs to the peptidase M50B family. It depends on Zn(2+) as a cofactor.

Its subcellular location is the cell inner membrane. The protein is Putative zinc metalloprotease Cj1068 of Campylobacter jejuni subsp. jejuni serotype O:2 (strain ATCC 700819 / NCTC 11168).